A 446-amino-acid polypeptide reads, in one-letter code: MVTFEDVAVHFTKTEWTGLSPAQRALYRSVMLENFGNLTALGYPVPKPALISLLEGGDMAWGLEAQDDPPAETTKNVRKDVETNIDSESTLIQGISEERDGMMSHGQLKSVPQRTDFPETCNVEKHQDIPTVKNIRGKVPRIPCARKPFICEECGKSFSYFSYYARHQRIHTGEKPFECSECGKAFNGNSSLIRHQRIHTGEKPYQCEECGRAFNDNANLIRHQRIHSGDRPYYCTECGNSFTSSSEFVIHQRIHTGEKPYECNECGKAFVGNSPLLRHQKIHTGEKPYECNECGKSFGRTSHLSQHQRIHTGEKPYSCKVCGQAFNFHTKLTRHQRIHSEEKPFDCVDCGKAFSAQEQLKRHLRIHTQESSYVCDECGKAFTSKRNLHQHQRIHTGEKPYEYSKYEKAFGTSSQLGHLEHVHSGEKPVLDICRFGLPEFFTPFYW.

One can recognise a KRAB domain in the interval 2-73; it reads VTFEDVAVHF…EAQDDPPAET (72 aa). 9 consecutive C2H2-type zinc fingers follow at residues 149–171, 177–199, 205–227, 233–255, 261–283, 289–311, 317–339, 345–367, and 373–395; these read FICEECGKSFSYFSYYARHQRIH, FECSECGKAFNGNSSLIRHQRIH, YQCEECGRAFNDNANLIRHQRIH, YYCTECGNSFTSSSEFVIHQRIH, YECNECGKAFVGNSPLLRHQKIH, YECNECGKSFGRTSHLSQHQRIH, YSCKVCGQAFNFHTKLTRHQRIH, FDCVDCGKAFSAQEQLKRHLRIH, and YVCDECGKAFTSKRNLHQHQRIH. The C2H2-type 10; degenerate zinc finger occupies 401–423; it reads YEYSKYEKAFGTSSQLGHLEHVH.

Belongs to the krueppel C2H2-type zinc-finger protein family.

It is found in the nucleus. Functionally, may be involved in transcriptional regulation. In Pongo abelii (Sumatran orangutan), this protein is Zinc finger protein 19 (ZNF19).